Consider the following 150-residue polypeptide: MIP18 family protein FAM96A (150 aa).

Belongs to the MIP18 family.

Functionally, may play a role in chromosome segregation through establishment of sister chromatid cohesion. The protein is MIP18 family protein FAM96A (fam96A) of Dictyostelium discoideum (Social amoeba).